We begin with the raw amino-acid sequence, 307 residues long: Mitochondrial glycine transporter (307 aa).

3 Solcar repeats span residues 8–87 (PRNS…MRSS), 115–199 (LTMY…SKQL), and 221–305 (TSTT…LVKR). 6 consecutive transmembrane segments (helical) span residues 14 to 39 (LIGG…TRIQ), 62 to 88 (GTLP…RSSL), 121 to 146 (LLTG…VRYE), 174 to 197 (GFGA…EKSK), 225 to 251 (VNTT…KTRM), and 280 to 298 (GLSM…AWGI).

The protein belongs to the mitochondrial carrier (TC 2.A.29) family. SLC25A38 subfamily.

It localises to the mitochondrion inner membrane. The catalysed reaction is glycine(in) = glycine(out). Its function is as follows. Mitochondrial glycine transporter that imports glycine into the mitochondrial matrix. Plays an important role in providing glycine for the first enzymatic step in heme biosynthesis, the condensation of glycine with succinyl-CoA to produce 5-aminolevulinate (ALA) in the mitochondrial matrix. This Saccharomyces cerevisiae (strain RM11-1a) (Baker's yeast) protein is Mitochondrial glycine transporter.